Consider the following 1100-residue polypeptide: cGMP-inhibited 3',5'-cyclic phosphodiesterase 3B (1100 aa).

Basic and acidic residues predominate over residues 1-11 (MRKDERERDAP). The segment at 1 to 28 (MRKDERERDAPAMRSPPPPPASAASPPE) is interaction with RAPGEF3. Residues 1–29 (MRKDERERDAPAMRSPPPPPASAASPPES) form a disordered region. Phosphoserine is present on S15. 6 consecutive transmembrane segments (helical) span residues 69-89 (AGARLSLGVLAAFVLAALLGA), 110-130 (LSLSPLFSIACAFFFLTCFLT), 140-160 (AGSWWLLALPACCYLGDFAAW), 170-190 (PAAAGRLCLVLSCVGLLTLAP), 198-218 (VLVLLFAGLVWWVSFSGLGAL), and 225-245 (LLSCLVGGAGCLLALGLDHFF). Position 273 is a phosphoserine; by PKB/AKT1 or PKB/AKT2 (S273). Phosphoserine occurs at positions 274 and 421. Disordered regions lie at residues 400 to 423 (RKLHKGLSGRTSFPTPQLRRSSGA) and 570 to 590 (EPDGTDHPSEKSGEEDSSVFS). A compositionally biased stretch (polar residues) spans 408 to 423 (GRTSFPTPQLRRSSGA). The tract at residues 415–439 (PQLRRSSGASSLLTNEHCSRWDRSS) is interaction with PIK3R6. Positions 573–583 (GTDHPSEKSGE) are enriched in basic and acidic residues. Residues 627–1061 (PNIDQEVSLD…KIWKEIIEEE (435 aa)) enclose the PDEase domain. Residue H713 is the Proton donor of the active site. H713 is an AMP binding site. Mg(2+) is bound by residues H717, H797, D798, and D913. D798, D913, and Q964 together coordinate AMP. Acidic residues predominate over residues 993–1024 (EEGDDTESDDDDDDDDGDGGEELDSDDEETED). A disordered region spans residues 993 to 1033 (EEGDDTESDDDDDDDDGDGGEELDSDDEETEDNLNPKPQRR). Residues 1044–1079 (MHHLTENHKIWKEIIEEEEEKCKAEGNKLQVDNASL) are a coiled coil.

The protein belongs to the cyclic nucleotide phosphodiesterase family. PDE3 subfamily. In terms of assembly, homodimer. Interacts with PIK3CG; regulates PDE3B activity and thereby cAMP levels in cells. Interacts with RAPGEF3 and PIK3R6; form a signaling complex that regulates phosphatidylinositol 3-kinase gamma in angiogenesis. Interacts with ABHD15; this interaction regulates PDE3B's stability and expression and, thereby, impacts the antilipolytic action of insulin. The cofactor is Mg(2+). Mn(2+) is required as a cofactor. Phosphorylation at Ser-273 mediates insulin-induced activation of PDE3B. As to expression, abundant in adipose tissues.

It is found in the membrane. It carries out the reaction a nucleoside 3',5'-cyclic phosphate + H2O = a nucleoside 5'-phosphate + H(+). The catalysed reaction is 3',5'-cyclic AMP + H2O = AMP + H(+). It catalyses the reaction 3',5'-cyclic GMP + H2O = GMP + H(+). Inhibited by cGMP. In terms of biological role, cyclic nucleotide phosphodiesterase with a dual-specificity for the second messengers cAMP and cGMP, which are key regulators of many important physiological processes. Regulates angiogenesis by inhibiting the cAMP-dependent guanine nucleotide exchange factor RAPGEF3 and downstream phosphatidylinositol 3-kinase gamma-mediated signaling. Controls cardiac contractility by reducing cAMP concentration in cardiocytes. The chain is cGMP-inhibited 3',5'-cyclic phosphodiesterase 3B from Mus musculus (Mouse).